Reading from the N-terminus, the 502-residue chain is Serine/threonine-protein kinase SKS1 (502 aa).

The Protein kinase domain maps to 10–338; that stretch reads FRITAQIGSG…SEVSSLTSFT (329 aa). ATP contacts are provided by residues 16–24 and K39; that span reads IGSGAYGLV. The Proton acceptor role is filled by D186. Composition is skewed to low complexity over residues 376-391 and 399-410; these read QEQQ…QVQE and EQIQNQEQAQQQ. The disordered stretch occupies residues 376 to 439; the sequence is QEQQQQQQQQ…GSMEKYEYTN (64 aa). The span at 411 to 420 shows a compositional bias: acidic residues; it reads QEEEDAEPES.

This sequence belongs to the protein kinase superfamily. Ser/Thr protein kinase family.

It carries out the reaction L-seryl-[protein] + ATP = O-phospho-L-seryl-[protein] + ADP + H(+). The enzyme catalyses L-threonyl-[protein] + ATP = O-phospho-L-threonyl-[protein] + ADP + H(+). May have a role in glucose regulation. The chain is Serine/threonine-protein kinase SKS1 (SKS1) from Saccharomyces cerevisiae (strain ATCC 204508 / S288c) (Baker's yeast).